A 1008-amino-acid chain; its full sequence is Retinoblastoma-related protein (1008 aa).

The tract at residues 375-394 is disordered; sequence KRKVDSMTSPTKTITSPLSP. Polar residues predominate over residues 380–392; the sequence is SMTSPTKTITSPL. A domain A region spans residues 404-605; it reads TPVSTAMTTA…EKGSSMYNSL (202 aa). Residues 404 to 853 are pocket; sequence TPVSTAMTTA…NEVFIPSVKP (450 aa). Positions 606–722 are spacer; it reads TIARPNLSNE…HPTRGETCGE (117 aa). A domain B region spans residues 723–853; the sequence is TAVNLFFSKI…NEVFIPSVKP (131 aa). Disordered stretches follow at residues 865 to 899 and 988 to 1008; these read KNPNNQVSDSNKKDESGPCPCPGSPKVSSFPSLPD and LQNGQNGKGPSSSSGQELKTE.

This sequence belongs to the retinoblastoma protein (RB) family.

It localises to the nucleus. Functionally, regulator of biological processes that recruits a histone deacetylase to control gene transcription. May play a role in the entry into mitosis, negatively regulating the cell proliferation. Formation of stable complexes with geminiviridae replication-associated proteins may create a cellular environment which favors viral DNA replication. The sequence is that of Retinoblastoma-related protein (RBR) from Pilosella officinarum (Mouse-ear hawkweed).